The sequence spans 727 residues: Putative E3 ubiquitin-protein ligase UNKL (727 aa).

Residues 1-21 (MPSVSKAAAAALSGSPPQTEK) are disordered. C3H1-type zinc fingers lie at residues 75-104 (YSPDIYCSKYDEATGLCPDGDECPYLHRTT), 115-145 (YYKTGTCIHETDARGHCVKNGLHCAFAHGPL), 243-277 (QYRSTPCPSVKHGDEWGEPSRCDGGDSCQYCHSRT), and 285-313 (IYKSTKCNDMRQTGYCPRGPFCAFAHTEK). Residues 330 to 339 (STSAYSSQPG) are compositionally biased toward polar residues. Disordered stretches follow at residues 330 to 360 (STSAYSSQPGSAKRKDSPSEGSQKATEDSKQ), 446 to 514 (LTGP…ATLG), and 543 to 562 (SPSPILNSGPSASSSASPNS). Over residues 463–495 (SLPRSPSLHSSSSLSTSPLSSLSQSLSGPLVSS) the composition is skewed to low complexity. An RING-type zinc finger spans residues 686-721 (CVACQERAHGTVLRPCQHRVLCEPCAASTPECPYCK).

The protein belongs to the unkempt family. In terms of assembly, interacts with the GTP-bound form of Rac1. Interacts with Baf60b/Smarcd2. Ubiquitination is enhanced by activated Rac1. The presence of the RING finger domain is not essential for ubiquitination to occur. In terms of tissue distribution, ubiquitous.

The protein resides in the cytoplasm. The protein localises to the nucleus. Its pathway is protein modification; protein ubiquitination. Functionally, may participate in a protein complex showing an E3 ligase activity regulated by Rac1. Ubiquitination is directed towards itself and possibly other substrates, such as Baf60b/Smarcd2. Intrinsic E3 ligase activity has not been proven. The sequence is that of Putative E3 ubiquitin-protein ligase UNKL (Unkl) from Mus musculus (Mouse).